The sequence spans 380 residues: Interleukin-13 receptor subunit alpha-2 (380 aa).

Positions 1–26 (MAFVCLAIGCLYTFLISTTFGCTSSS) are cleaved as a signal peptide. The Extracellular portion of the chain corresponds to 27 to 343 (DTEIKVNPPQ…EDLSKKTLLR (317 aa)). 3 consecutive Fibronectin type-III domains span residues 34–134 (PPQD…SPQG), 139–235 (KVQD…LQNI), and 240–333 (PPVY…CWEG). Cys-65 and Cys-113 form a disulfide bridge. Asn-115 is a glycosylation site (N-linked (GlcNAc...) asparagine). 2 disulfide bridges follow: Cys-145–Cys-155 and Cys-184–Cys-197. N-linked (GlcNAc...) asparagine glycans are attached at residues Asn-215, Asn-290, and Asn-299. A disulfide bridge links Cys-269 with Cys-316. Residues 322 to 326 (WSEWS) carry the WSXWS motif motif. A helical membrane pass occupies residues 344 to 363 (FWLPFGFILILVIFVTGLLL). The Cytoplasmic portion of the chain corresponds to 364–380 (RKPNTYPKMIPEFFCDT).

The protein belongs to the type I cytokine receptor family. Type 5 subfamily. In terms of assembly, interacts with IL4RA. Interacts with high affinity to interleukin-13 (IL13), but not to interleukin-4 (IL4). Cleaved by MMP8 leading to a soluble form that is also able to interact with IL13.

It is found in the cell membrane. Its function is as follows. Cell surface receptor that plays a role in the regulation of IL-13-mediated responses. Functions as a decoy receptor that inhibits IL-13- and IL-4-mediated signal transduction via the JAK-STAT pathway and thereby modulates immune responses and inflammation. Serves as a functional signaling receptor for IL-13 in an alternative pathway involving AP-1 ultimately leading to the production of TGFB1. The sequence is that of Interleukin-13 receptor subunit alpha-2 (IL13RA2) from Homo sapiens (Human).